We begin with the raw amino-acid sequence, 488 residues long: Zinc metalloproteinase-disintegrin VMP-II (488 aa).

The signal sequence occupies residues 1–20 (MIQVLLVTICLAVFPYQGSS). The propeptide occupies 21–191 (IILESGNVND…KASQSNIPPE (171 aa)). Residues 198–396 (RYIELVVVAD…STTRCLHNEP (199 aa)) form the Peptidase M12B domain. Residues E201 and D285 each coordinate Ca(2+). N-linked (GlcNAc...) asparagine glycosylation is present at N296. Cystine bridges form between C309–C391, C349–C373, and C351–C356. H334 contributes to the Zn(2+) binding site. E335 is a catalytic residue. Zn(2+) is bound by residues H338 and H344. The Ca(2+) site is built by C391, N394, N409, E413, E416, and D419. Residues 404–488 (PPFCGNYFKE…ADCPRNGLYG (85 aa)) enclose the Disintegrin domain. 7 cysteine pairs are disulfide-bonded: C407–C426, C418–C436, C420–C431, C430–C453, C444–C450, C449–C474, and C462–C481. The Cell attachment site signature appears at 466–468 (RGD).

Belongs to the venom metalloproteinase (M12B) family. P-II subfamily. P-IIb sub-subfamily. In terms of assembly, homodimer; disulfide-linked (disintegrin). It depends on Zn(2+) as a cofactor. As to expression, expressed by the venom gland.

It localises to the secreted. Zinc metalloproteinase-disintegrin VMP-II: inhibits ADP-induced platelet aggregation (probably by binding integrin alpha-IIb/beta-3 (ITGA2B/ITGB3)) and degrades fibrinogen. Functionally, recombinant disintegrin r-Cam-dis (413-488): this recombinant protein inhibits platelet adhesion to fibrinogen (IC(50) is 1 nM), inhibits collagen- (IC(50) is 18 nM) and ADP-induced (IC(50) is 6 nM) platelet aggregation, and also inhibits platelet function on clot retraction. May act by binding integrin alpha-IIb/beta-3 (ITGA2B/ITGB3). This Crotalus adamanteus (Eastern diamondback rattlesnake) protein is Zinc metalloproteinase-disintegrin VMP-II.